A 317-amino-acid chain; its full sequence is Aspartate carbamoyltransferase catalytic subunit (317 aa).

Carbamoyl phosphate is bound by residues Arg64 and Thr65. Lys92 provides a ligand contact to L-aspartate. Arg114, His144, and Gln147 together coordinate carbamoyl phosphate. Residues Arg177 and Arg232 each coordinate L-aspartate. Residues Gly273 and Pro274 each contribute to the carbamoyl phosphate site.

The protein belongs to the aspartate/ornithine carbamoyltransferase superfamily. ATCase family. In terms of assembly, heterododecamer (2C3:3R2) of six catalytic PyrB chains organized as two trimers (C3), and six regulatory PyrI chains organized as three dimers (R2).

The catalysed reaction is carbamoyl phosphate + L-aspartate = N-carbamoyl-L-aspartate + phosphate + H(+). It functions in the pathway pyrimidine metabolism; UMP biosynthesis via de novo pathway; (S)-dihydroorotate from bicarbonate: step 2/3. Catalyzes the condensation of carbamoyl phosphate and aspartate to form carbamoyl aspartate and inorganic phosphate, the committed step in the de novo pyrimidine nucleotide biosynthesis pathway. The sequence is that of Aspartate carbamoyltransferase catalytic subunit from Thiobacillus denitrificans (strain ATCC 25259 / T1).